Reading from the N-terminus, the 105-residue chain is Dynein axonemal light chain 4 (105 aa).

Belongs to the dynein light chain family. In terms of assembly, consists of at least two heavy chains and a number of intermediate and light chains.

The protein resides in the cytoplasm. It is found in the cytoskeleton. The protein localises to the cilium axoneme. Its function is as follows. Force generating protein of respiratory cilia. Produces force towards the minus ends of microtubules. Dynein has ATPase activity. This Mus musculus (Mouse) protein is Dynein axonemal light chain 4 (Dnal4).